We begin with the raw amino-acid sequence, 397 residues long: CCA-adding enzyme (397 aa).

ATP is bound by residues Gly26 and Arg29. Residues Gly26 and Arg29 each coordinate CTP. Residues Asp39 and Asp41 each coordinate Mg(2+). Arg110, Asp153, Arg156, Arg159, and Arg162 together coordinate ATP. CTP-binding residues include Arg110, Asp153, Arg156, Arg159, and Arg162.

The protein belongs to the tRNA nucleotidyltransferase/poly(A) polymerase family. Bacterial CCA-adding enzyme type 3 subfamily. As to quaternary structure, homodimer. Mg(2+) is required as a cofactor.

The enzyme catalyses a tRNA precursor + 2 CTP + ATP = a tRNA with a 3' CCA end + 3 diphosphate. The catalysed reaction is a tRNA with a 3' CCA end + 2 CTP + ATP = a tRNA with a 3' CCACCA end + 3 diphosphate. Its function is as follows. Catalyzes the addition and repair of the essential 3'-terminal CCA sequence in tRNAs without using a nucleic acid template. Adds these three nucleotides in the order of C, C, and A to the tRNA nucleotide-73, using CTP and ATP as substrates and producing inorganic pyrophosphate. tRNA 3'-terminal CCA addition is required both for tRNA processing and repair. Also involved in tRNA surveillance by mediating tandem CCA addition to generate a CCACCA at the 3' terminus of unstable tRNAs. While stable tRNAs receive only 3'-terminal CCA, unstable tRNAs are marked with CCACCA and rapidly degraded. The protein is CCA-adding enzyme of Bacillus cereus (strain Q1).